We begin with the raw amino-acid sequence, 318 residues long: MTVKPELNEITPYLQFNRQQWGNFRKDTPLTLTESDLDKLQGQIEIVSLKEVTEIYLPLSRLLSFYVTARQTLQQATYQFLGKPEPKVPYIIGIAGSVAVGKSTTSRVLKALLSRWPDHPNVEVITTDGFLYSNAKLEKQGLMKRKGFPESYDMPSLLRVLNAIKSGQRNVRIPVYSHHYYDIVRGQYEIVDQPDIVILEGLNILQTGVRKTLQQLQVFVSDFFDFSLFVDAQAQVIQKWYIDRVLSFWRTTFKDPHSYFHYLTQMSETEVAAFAKHVWNEINKVNLMENILPYKNRAQLILEKAADHSIQKVYLRKI.

96–103 (GSVAVGKS) is a binding site for ATP.

Belongs to the prokaryotic pantothenate kinase family.

It is found in the cytoplasm. The catalysed reaction is (R)-pantothenate + ATP = (R)-4'-phosphopantothenate + ADP + H(+). It functions in the pathway cofactor biosynthesis; coenzyme A biosynthesis; CoA from (R)-pantothenate: step 1/5. The sequence is that of Pantothenate kinase from Coxiella burnetii (strain RSA 493 / Nine Mile phase I).